We begin with the raw amino-acid sequence, 334 residues long: L-lactate dehydrogenase (334 aa).

Residues 1 to 22 (MASTKGKLIHEMVPSKERDPPH) form a disordered region. Residues 8–22 (LIHEMVPSKERDPPH) show a composition bias toward basic and acidic residues. NAD(+) contacts are provided by residues 31–59 (GQVG…VEDR) and R101. Positions 108, 140, and 171 each coordinate substrate. N140 serves as a coordination point for NAD(+). Residue H195 is the Proton acceptor of the active site. Residue T250 coordinates substrate.

It belongs to the LDH/MDH superfamily. LDH family. Homotetramer.

Its subcellular location is the cytoplasm. It carries out the reaction (S)-lactate + NAD(+) = pyruvate + NADH + H(+). It functions in the pathway fermentation; pyruvate fermentation to lactate; (S)-lactate from pyruvate: step 1/1. This is L-lactate dehydrogenase from Petromyzon marinus (Sea lamprey).